The sequence spans 358 residues: Septin-12 (358 aa).

The interval Met-1–Glu-25 is disordered. A compositionally biased stretch (low complexity) spans Arg-6 to Ser-18. Residues Met-46 to Glu-317 enclose the Septin-type G domain. The tract at residues Met-46 to His-319 is interaction with SEPTIN7. Residues Gly-56 to Ser-63 are G1 motif. GTP-binding positions include Gly-56 to Ser-63, Thr-89, Gly-115, Arg-195 to Glu-203, Gly-251, and Arg-266. The interval Asp-112 to Gly-115 is G3 motif. A G4 motif region spans residues Ala-194 to Asp-197. Residues Val-258 to Phe-358 form a self-association (via N-terminus) to polymerize octameric septin 12-7-6-2/4-2/4-6-7-12 filaments region.

It belongs to the TRAFAC class TrmE-Era-EngA-EngB-Septin-like GTPase superfamily. Septin GTPase family. In terms of assembly, septins polymerize into heterooligomeric protein complexes that form filaments, and can associate with cellular membranes, actin filaments and microtubules. GTPase activity is required for filament formation. Interacts with SEPTIN6 and SEPTIN11. Self-associates. Component of a septin core octameric complex consisting of SEPTIN12, SEPTIN7, SEPTIN6 and SEPTIN2 or SEPTIN4 in the order 12-7-6-2-2-6-7-12 or 12-7-6-4-4-6-7-12 and located in the sperm annulus; the octamer polymerizes into filaments via the SEPTIN12 N- and C-termini; the SEPTIN12:SEPTIN7 association is mediated by the respective GTP-binding domains. Interacts with SPAG4 and LMNB1. Associates with alpha- and beta-tubulins. Widely expressed. Expressed in lymph node.

It is found in the cytoplasm. Its subcellular location is the cytoskeleton. It localises to the spindle. The protein resides in the nucleus. The protein localises to the cell projection. It is found in the cilium. Its subcellular location is the flagellum. In terms of biological role, filament-forming cytoskeletal GTPase. Involved in spermatogenesis. Involved in the morphogenesis of sperm heads and the elongation of sperm tails probably implicating the association with alpha- and beta-tubulins. Forms a filamentous structure with SEPTIN7, SEPTIN6, SEPTIN2 and probably SEPTIN4 at the sperm annulus which is required for the structural integrity and motility of the sperm tail during postmeiotic differentiation. May play a role in cytokinesis (Potential). The sequence is that of Septin-12 from Homo sapiens (Human).